The following is a 92-amino-acid chain: Small ribosomal subunit protein uS19c (92 aa).

Belongs to the universal ribosomal protein uS19 family.

It is found in the plastid. Its subcellular location is the chloroplast. Protein S19 forms a complex with S13 that binds strongly to the 16S ribosomal RNA. This chain is Small ribosomal subunit protein uS19c (rps19), found in Trieres chinensis (Marine centric diatom).